Reading from the N-terminus, the 230-residue chain is Urease accessory protein UreG (230 aa).

Gly-33–Thr-40 serves as a coordination point for GTP.

The protein belongs to the SIMIBI class G3E GTPase family. UreG subfamily. As to quaternary structure, homodimer. UreD, UreF and UreG form a complex that acts as a GTP-hydrolysis-dependent molecular chaperone, activating the urease apoprotein by helping to assemble the nickel containing metallocenter of UreC. The UreE protein probably delivers the nickel.

The protein resides in the cytoplasm. Facilitates the functional incorporation of the urease nickel metallocenter. This process requires GTP hydrolysis, probably effectuated by UreG. This is Urease accessory protein UreG from Mycobacteroides abscessus (strain ATCC 19977 / DSM 44196 / CCUG 20993 / CIP 104536 / JCM 13569 / NCTC 13031 / TMC 1543 / L948) (Mycobacterium abscessus).